An 815-amino-acid polypeptide reads, in one-letter code: Leucine--tRNA ligase (815 aa).

The 'HIGH' region motif lies at 40 to 50 (PYPSGRIHMGH). The short motif at 583-587 (KMSKS) is the 'KMSKS' region element. Lys586 is a binding site for ATP.

It belongs to the class-I aminoacyl-tRNA synthetase family.

Its subcellular location is the cytoplasm. The catalysed reaction is tRNA(Leu) + L-leucine + ATP = L-leucyl-tRNA(Leu) + AMP + diphosphate. The polypeptide is Leucine--tRNA ligase (Nitratiruptor sp. (strain SB155-2)).